The following is a 163-amino-acid chain: Putative pre-16S rRNA nuclease (163 aa).

The protein belongs to the YqgF nuclease family.

It is found in the cytoplasm. Could be a nuclease involved in processing of the 5'-end of pre-16S rRNA. In Roseobacter denitrificans (strain ATCC 33942 / OCh 114) (Erythrobacter sp. (strain OCh 114)), this protein is Putative pre-16S rRNA nuclease.